A 349-amino-acid polypeptide reads, in one-letter code: ATP synthase subunit a-2 (349 aa).

Residues 1 to 97 (MERLTRLNHF…SNYMKLMEIP (97 aa)) constitute a propeptide that is removed on maturation. 7 helical membrane passes run 118-138 (FSFT…LLLI), 184-204 (FFPC…QGMI), 213-233 (HFLI…IVGF), 240-260 (FFSF…LVLL), 280-300 (MMAG…MLCM), 303-323 (IFYF…TGLE), and 326-346 (VAIL…NDAI).

It belongs to the ATPase A chain family. In terms of assembly, F-type ATPases have 2 components, CF(1) - the catalytic core - and CF(0) - the membrane proton channel. CF(1) has five subunits: alpha(3), beta(3), gamma(1), delta(1), epsilon(1). CF(0) has three main subunits: a, b and c.

It localises to the mitochondrion inner membrane. Functionally, mitochondrial membrane ATP synthase (F(1)F(0) ATP synthase or Complex V) produces ATP from ADP in the presence of a proton gradient across the membrane which is generated by electron transport complexes of the respiratory chain. F-type ATPases consist of two structural domains, F(1) - containing the extramembraneous catalytic core and F(0) - containing the membrane proton channel, linked together by a central stalk and a peripheral stalk. During catalysis, ATP synthesis in the catalytic domain of F(1) is coupled via a rotary mechanism of the central stalk subunits to proton translocation. Key component of the proton channel; it may play a direct role in the translocation of protons across the membrane. The sequence is that of ATP synthase subunit a-2 (ATP6-2) from Arabidopsis thaliana (Mouse-ear cress).